The sequence spans 265 residues: MLTFIGLGLYDERSITVEGREALRSADRVFAEFYTSRLVGADVDDLEAYHDTEIEVRAREGVEQDPEAILAAAEDGHTAFLTAGDTMISTTHTDLRLRAEERGIDTRVIHGVTAQSAASSLTGLQNYRFGKATTLPFPYAHGGDDVPGSVIDTIEANRERGLHTVVYLDIKVGTGPTGPDPDHEEYMTADVAAGLLADGWEDALAVVVARAGSPDAVVAADRLSALADREFGDPLHLLVIPGDLHHVEADALVGLAGAPAELVEE.

Residues L9, D85, I88, 113–114 (TA), L168, A211, and H236 contribute to the S-adenosyl-L-methionine site.

Belongs to the diphthine synthase family. As to quaternary structure, homodimer.

It catalyses the reaction 2-[(3S)-amino-3-carboxypropyl]-L-histidyl-[translation elongation factor 2] + 3 S-adenosyl-L-methionine = diphthine-[translation elongation factor 2] + 3 S-adenosyl-L-homocysteine + 3 H(+). Its pathway is protein modification; peptidyl-diphthamide biosynthesis. Its function is as follows. S-adenosyl-L-methionine-dependent methyltransferase that catalyzes the trimethylation of the amino group of the modified target histidine residue in translation elongation factor 2 (EF-2), to form an intermediate called diphthine. The three successive methylation reactions represent the second step of diphthamide biosynthesis. This chain is Diphthine synthase, found in Halorubrum lacusprofundi (strain ATCC 49239 / DSM 5036 / JCM 8891 / ACAM 34).